A 372-amino-acid polypeptide reads, in one-letter code: Chaperone protein DnaJ (372 aa).

Residues 5-70 (DYYDLLEVGR…EKRAGYDRYG (66 aa)) form the J domain. The CR-type zinc finger occupies 134 to 212 (GIQAPIHYVT…CGGSGRRRDE (79 aa)). Zn(2+)-binding residues include Cys147, Cys150, Cys164, Cys167, Cys186, Cys189, Cys200, and Cys203. CXXCXGXG motif repeat units lie at residues 147-154 (CDTCQGTG), 164-171 (CHTCQGSG), 186-193 (CTTCYGEG), and 200-207 (CKKCGGSG).

Belongs to the DnaJ family. In terms of assembly, homodimer. Zn(2+) serves as cofactor.

The protein resides in the cytoplasm. Its function is as follows. Participates actively in the response to hyperosmotic and heat shock by preventing the aggregation of stress-denatured proteins and by disaggregating proteins, also in an autonomous, DnaK-independent fashion. Unfolded proteins bind initially to DnaJ; upon interaction with the DnaJ-bound protein, DnaK hydrolyzes its bound ATP, resulting in the formation of a stable complex. GrpE releases ADP from DnaK; ATP binding to DnaK triggers the release of the substrate protein, thus completing the reaction cycle. Several rounds of ATP-dependent interactions between DnaJ, DnaK and GrpE are required for fully efficient folding. Also involved, together with DnaK and GrpE, in the DNA replication of plasmids through activation of initiation proteins. The sequence is that of Chaperone protein DnaJ from Wolbachia pipientis wMel.